Reading from the N-terminus, the 292-residue chain is NAD kinase (292 aa).

Residue Asp73 is the Proton acceptor of the active site. NAD(+) contacts are provided by residues 73–74 (DG), 147–148 (NE), His158, Arg175, Asp177, 188–193 (TGYSLS), and Gln247.

Belongs to the NAD kinase family. Requires a divalent metal cation as cofactor.

The protein resides in the cytoplasm. It catalyses the reaction NAD(+) + ATP = ADP + NADP(+) + H(+). In terms of biological role, involved in the regulation of the intracellular balance of NAD and NADP, and is a key enzyme in the biosynthesis of NADP. Catalyzes specifically the phosphorylation on 2'-hydroxyl of the adenosine moiety of NAD to yield NADP. This Buchnera aphidicola subsp. Schizaphis graminum (strain Sg) protein is NAD kinase.